The following is a 196-amino-acid chain: Small ribosomal subunit protein uS4c (196 aa).

Positions 15 to 43 are disordered; it reads LGALPGLTRKTPKSGSNQKKKFHSGKKEQ. Residues 89 to 150 enclose the S4 RNA-binding domain; that stretch reads MRLDNILFRL…NQRSKRLVQN (62 aa).

This sequence belongs to the universal ribosomal protein uS4 family. In terms of assembly, part of the 30S ribosomal subunit. Contacts protein S5. The interaction surface between S4 and S5 is involved in control of translational fidelity.

Its subcellular location is the plastid. It is found in the chloroplast. One of the primary rRNA binding proteins, it binds directly to 16S rRNA where it nucleates assembly of the body of the 30S subunit. Functionally, with S5 and S12 plays an important role in translational accuracy. In Melinis repens (Red Natal grass), this protein is Small ribosomal subunit protein uS4c (rps4).